The sequence spans 156 residues: MDSAGLHINFRLSHVLTVVTCILYILPPTTTAYSLPAPGKAAFQHQLSKRDVSDGSAERRPYTRMGSGGLKLHCQVHPANCPGGLMVTKKSDLLGALLSRNSPSSYGLPSRDMSTAYKRQDVRQQLRMFDDLVQLRKLIETPSVYPSEEDEARLYD.

A signal peptide spans 1–26 (MDSAGLHINFRLSHVLTVVTCILYIL). Residues 27–48 (PPTTTAYSLPAPGKAAFQHQLS) constitute a propeptide that is removed on maturation. A disulfide bridge links Cys74 with Cys81. At Gln120 the chain carries Pyrrolidone carboxylic acid.

Expressed within the abdominal ganglion in neurons R15, RB(HE), the two L9(G) gill motoneurons, and L40 interneuron, all are parts of autonomic control circuit that contributes to implementing a central command to coordinate autonomic activity with escape locomotion.

It localises to the secreted. In terms of biological role, the alpha-1 peptide acts as an osmoregulatory peptide, increasing blood volume, and also modulates the activity of a set of cardiac motor neurons that control heart rate. This Aplysia californica (California sea hare) protein is Neuroactive polyprotein R15.